A 163-amino-acid polypeptide reads, in one-letter code: Ribonuclease P protein subunit p25-like protein (163 aa).

Disordered regions lie at residues 1–22 (MEHY…PQLP) and 129–163 (NEYG…DTRF). Residues 154–163 (PRRRARDTRF) show a composition bias toward basic residues.

The protein belongs to the histone-like Alba family.

The protein localises to the nucleus. In terms of biological role, may be a component of ribonuclease P or MRP. The sequence is that of Ribonuclease P protein subunit p25-like protein (RPP25L) from Bos taurus (Bovine).